We begin with the raw amino-acid sequence, 119 residues long: Hydrogenase maturation factor HypA (119 aa).

H2 contacts Ni(2+). Residues C73, C76, C90, and C93 each coordinate Zn(2+).

The protein belongs to the HypA/HybF family.

In terms of biological role, involved in the maturation of [NiFe] hydrogenases. Required for nickel insertion into the metal center of the hydrogenase. The polypeptide is Hydrogenase maturation factor HypA (Wolinella succinogenes (strain ATCC 29543 / DSM 1740 / CCUG 13145 / JCM 31913 / LMG 7466 / NCTC 11488 / FDC 602W) (Vibrio succinogenes)).